A 488-amino-acid chain; its full sequence is Glutamate--tRNA ligase (488 aa).

The 'HIGH' region signature appears at Pro11 to Asn21. Cys108, Cys110, Cys135, and Asp137 together coordinate Zn(2+). A 'KMSKS' region motif is present at residues Lys252–Arg256. Lys255 serves as a coordination point for ATP.

It belongs to the class-I aminoacyl-tRNA synthetase family. Glutamate--tRNA ligase type 1 subfamily. As to quaternary structure, monomer. Requires Zn(2+) as cofactor.

The protein localises to the cytoplasm. It catalyses the reaction tRNA(Glu) + L-glutamate + ATP = L-glutamyl-tRNA(Glu) + AMP + diphosphate. Catalyzes the attachment of glutamate to tRNA(Glu) in a two-step reaction: glutamate is first activated by ATP to form Glu-AMP and then transferred to the acceptor end of tRNA(Glu). The chain is Glutamate--tRNA ligase from Natranaerobius thermophilus (strain ATCC BAA-1301 / DSM 18059 / JW/NM-WN-LF).